The primary structure comprises 256 residues: Phosphatidylglycerol--prolipoprotein diacylglyceryl transferase (256 aa).

Helical transmembrane passes span 19 to 39 (VHWYGLMYLIGFVGAWLLGYW), 56 to 76 (LIFYSALGVILGGRVGYMLFY), and 91 to 111 (IWEGGMSFHGGLLGVVIAAWL). Position 139 (R139) interacts with a 1,2-diacyl-sn-glycero-3-phospho-(1'-sn-glycerol). Residues 231 to 251 (FGWLTMGQVLSIPMLLIGIWL) form a helical membrane-spanning segment.

This sequence belongs to the Lgt family.

The protein resides in the cell inner membrane. The catalysed reaction is L-cysteinyl-[prolipoprotein] + a 1,2-diacyl-sn-glycero-3-phospho-(1'-sn-glycerol) = an S-1,2-diacyl-sn-glyceryl-L-cysteinyl-[prolipoprotein] + sn-glycerol 1-phosphate + H(+). It functions in the pathway protein modification; lipoprotein biosynthesis (diacylglyceryl transfer). In terms of biological role, catalyzes the transfer of the diacylglyceryl group from phosphatidylglycerol to the sulfhydryl group of the N-terminal cysteine of a prolipoprotein, the first step in the formation of mature lipoproteins. This Legionella pneumophila subsp. pneumophila (strain Philadelphia 1 / ATCC 33152 / DSM 7513) protein is Phosphatidylglycerol--prolipoprotein diacylglyceryl transferase.